Here is a 756-residue protein sequence, read N- to C-terminus: Hormone-sensitive lipase (756 aa).

The short motif at 350–352 (HGG) is the Involved in the stabilization of the negatively charged intermediate by the formation of the oxyanion hole element. S424 is an active-site residue. Disordered regions lie at residues 542–570 (SVSKTEPMRRSVSEAALTQPEGSLGTDSL) and 581–600 (RNSSDTTDTPELSLSAETLG). S552 carries the phosphoserine; by PKA modification. S554 carries the phosphoserine; by AMPK modification. A compositionally biased stretch (polar residues) spans 581–596 (RNSSDTTDTPELSLSA). S595 and S649 each carry phosphoserine. Residues D692 and H722 contribute to the active site.

The protein belongs to the 'GDXG' lipolytic enzyme family. As to quaternary structure, monomer and homodimer. Interacts with CAVIN1 in the adipocyte cytoplasm. Interacts with PLIN5. Phosphorylation by AMPK reduces its translocation towards the lipid droplets.

It is found in the cell membrane. Its subcellular location is the membrane. It localises to the caveola. The protein localises to the cytoplasm. The protein resides in the cytosol. It is found in the lipid droplet. The catalysed reaction is a diacylglycerol + H2O = a monoacylglycerol + a fatty acid + H(+). It carries out the reaction a triacylglycerol + H2O = a diacylglycerol + a fatty acid + H(+). It catalyses the reaction a monoacylglycerol + H2O = glycerol + a fatty acid + H(+). The enzyme catalyses Hydrolyzes glycerol monoesters of long-chain fatty acids.. The catalysed reaction is 1,2-di-(9Z-octadecenoyl)-glycerol + (9Z)-octadecenoate + H(+) = 1,2,3-tri-(9Z-octadecenoyl)-glycerol + H2O. It carries out the reaction 2,3-di-(9Z)-octadecenoyl-sn-glycerol + H2O = 2-(9Z-octadecenoyl)-glycerol + (9Z)-octadecenoate + H(+). It catalyses the reaction cholesteryl (9Z-octadecenoate) + H2O = cholesterol + (9Z)-octadecenoate + H(+). The enzyme catalyses 1,2,3-tri-(9Z-octadecenoyl)-glycerol + H2O = di-(9Z)-octadecenoylglycerol + (9Z)-octadecenoate + H(+). The catalysed reaction is all-trans-retinyl hexadecanoate + H2O = all-trans-retinol + hexadecanoate + H(+). It carries out the reaction 1,2-di-(9Z-octadecenoyl)-glycerol + H2O = (9Z-octadecenoyl)-glycerol + (9Z)-octadecenoate + H(+). It catalyses the reaction 2-(5Z,8Z,11Z,14Z-eicosatetraenoyl)-glycerol + H2O = glycerol + (5Z,8Z,11Z,14Z)-eicosatetraenoate + H(+). The enzyme catalyses 1-(9Z-octadecenoyl)-glycerol + H2O = glycerol + (9Z)-octadecenoate + H(+). The catalysed reaction is 2-(9Z-octadecenoyl)-glycerol + H2O = glycerol + (9Z)-octadecenoate + H(+). It carries out the reaction 1-O-hexadecyl-2-acetyl-sn-glycerol + H2O = 1-O-hexadecyl-sn-glycerol + acetate + H(+). It catalyses the reaction 1,2-di-(9Z-octadecenoyl)-sn-glycerol + H2O = (9Z-octadecenoyl)-glycerol + (9Z)-octadecenoate + H(+). The enzyme catalyses 1,3-di-(9Z-octadecenoyl)-glycerol + H2O = 1-(9Z-octadecenoyl)-glycerol + (9Z)-octadecenoate + H(+). The catalysed reaction is 1,2-di-(9Z-octadecenoyl)-glycerol + H2O = 2-(9Z-octadecenoyl)-glycerol + (9Z)-octadecenoate + H(+). It participates in glycerolipid metabolism; triacylglycerol degradation. In terms of biological role, lipase with broad substrate specificity, catalyzing the hydrolysis of triacylglycerols (TAGs), diacylglycerols (DAGs), monoacylglycerols (MAGs), cholesteryl esters and retinyl esters. Shows a preferential hydrolysis of DAGs over TAGs and MAGs. Preferentially hydrolyzes fatty acid (FA) esters at the sn-3 position of the glycerol backbone in DAGs and FA esters at the sn-1 and sn-2 positions of the glycerol backbone in TAGs. Catalyzes the hydrolysis of 2-arachidonoylglycerol, an endocannabinoid and of 2-acetyl monoalkylglycerol ether, the penultimate precursor of the pathway for de novo synthesis of platelet-activating factor. In adipose tissue and heart, it primarily hydrolyzes stored triglycerides to free fatty acids, while in steroidogenic tissues, it principally converts cholesteryl esters to free cholesterol for steroid hormone production. This is Hormone-sensitive lipase (LIPE) from Bos taurus (Bovine).